A 1955-amino-acid polypeptide reads, in one-letter code: Rootletin (1955 aa).

Coiled coils occupy residues 29 to 58, 162 to 223, 284 to 1303, 1368 to 1579, and 1607 to 1863; these read EENR…ESIE, EENL…QQHT, LMRK…AVES, VGVT…EELR, and RRWE…RTKG. Disordered stretches follow at residues 321-341, 391-451, 504-551, 907-935, and 961-998; these read VTEN…DLKR, LTTK…KKLD, LKER…RSLK, EKLN…NEAV, and RDLE…QKTL. Basic and acidic residues-rich tracts occupy residues 326-341 and 396-451; these read MKSE…DLKR and GEID…KKLD. Basic and acidic residues-rich tracts occupy residues 907 to 931, 961 to 982, and 989 to 998; these read EKLN…ESSK, RDLE…KMEL, and EDRKKEQKTL.

It belongs to the rootletin family. Expressed in head ciliated neurons.

Its subcellular location is the cytoplasm. It localises to the cytoskeleton. The protein localises to the cilium basal body. It is found in the cilium axoneme. In terms of biological role, major structural component of the ciliary rootlet, a cytoskeletal-like structure in ciliated cells which originates from the basal body at the proximal end of a cilium and extends proximally toward the cell nucleus. Required for cilia integrity and function in sensory neurons. Maintains cilia integrity, partly by modulating the assembly and transport of intraflagellar proteins along the ciliary axoneme. Required for normal mating behavior and normal responses to environmental and chemical stimuli. The protein is Rootletin of Caenorhabditis elegans.